The sequence spans 449 residues: MNYNNKILVSESGLSQKHLIHGDEELFQHELKTIFARNWLFLTHDSLIPAPGDYVTAKMGIDEVIVSRQNDGSIRAFLNVCRHRGKTLVSVEAGNAKGFVCSYHGWGFGSNGELQSVPFEKDLYGESLNKKCLGLKEVARVESFHGFIYGCFDQEAPPLMDYLGDAAWYLEPMFKHSGGLELVGPPGKVVIKANWKAPAENFVGDAYHVGWTHASSLRSGESIFSSLAGNAALPPEGAGLQMTSKYGSGMGVLWDGYSGVHSADLVPELMAFGGAKQERLNKEIGDVRARIYRSHLNCTVFPNNSMLTCSGVFKVWNPIDANTTEVWTYAIVEKDMPEDLKRRLADSVQRTFGPAGFWESDDNDNMETASQNGKKYQSRDSDLLSNLGFGEDVYGDAVYPGVVGKSAIGETSYRGFYRAYQAHVSSSNWAEFEHASSTWHTELTKTTDR.

Positions 39 to 137 (WLFLTHDSLI…LNKKCLGLKE (99 aa)) constitute a Rieske domain. Cys-81, His-83, Cys-101, and His-104 together coordinate [2Fe-2S] cluster. The Fe cation site is built by His-208, His-213, and Asp-362.

The protein belongs to the bacterial ring-hydroxylating dioxygenase alpha subunit family. In terms of assembly, the naphthalene dioxygenase (NDO) multicomponent enzyme system is composed of an electron transfer component and a dioxygenase component (iron sulfur protein (ISP)). The electron transfer component is composed of a ferredoxin reductase (NdoR) and a ferredoxin (NdoA), and the dioxygenase component is formed of a heterohexamer (trimer of heterodimers) of three large alpha subunits (NdoB) and three small beta subunits (NdoC). Requires [2Fe-2S] cluster as cofactor. Fe(2+) serves as cofactor.

It catalyses the reaction naphthalene + NADH + O2 + H(+) = (1R,2S)-1,2-dihydronaphthalene-1,2-diol + NAD(+). It functions in the pathway aromatic compound metabolism; naphthalene degradation. In terms of biological role, component of the naphthalene dioxygenase (NDO) multicomponent enzyme system which catalyzes the incorporation of both atoms of molecular oxygen into naphthalene to form cis-(1R,2S)-dihydroxy-1,2-dihydronaphthalene. The alpha subunit has a catalytic role in the holoenzyme. Also able to catalyze the cis-dihydroxylation of biphenyl and phenanthrene. In Pseudomonas putida (Arthrobacter siderocapsulatus), this protein is Naphthalene 1,2-dioxygenase system, large oxygenase component.